The following is a 977-amino-acid chain: Monofunctional C1-tetrahydrofolate synthase, mitochondrial (977 aa).

A mitochondrion-targeting transit peptide spans 1–31; sequence MSVRLPLLLRQLGRQQLPSGPACRLRELCRS. A disordered region spans residues 29 to 71; the sequence is CRSGSRSSSSGGGDPEGLRGRRLQDGQTFSSHGPGNPEAPGMD. The segment at 32–347 is methylenetetrahydrofolate dehydrogenase and cyclohydrolase; that stretch reads GSRSSSSGGG…REQQHRRWRL (316 aa). Position 188 is an N6-acetyllysine; alternate (lysine 188). N6-succinyllysine; alternate is present on lysine 188. The formyltetrahydrofolate synthetase stretch occupies residues 348–977; that stretch reads HCLKLQPLSP…TETEQVKGLF (630 aa). Serine 356 carries the phosphoserine modification. 422-429 serves as a coordination point for ATP; sequence TPLGEGKS. Residue lysine 595 is modified to N6-succinyllysine.

In the N-terminal section; belongs to the tetrahydrofolate dehydrogenase/cyclohydrolase family. This sequence in the C-terminal section; belongs to the formate--tetrahydrofolate ligase family. As to quaternary structure, homodimer.

It is found in the mitochondrion. It carries out the reaction (6S)-5,6,7,8-tetrahydrofolate + formate + ATP = (6R)-10-formyltetrahydrofolate + ADP + phosphate. The protein operates within one-carbon metabolism; tetrahydrofolate interconversion. Functionally, may provide the missing metabolic reaction required to link the mitochondria and the cytoplasm in the mammalian model of one-carbon folate metabolism complementing thus the enzymatic activities of MTHFD2. The sequence is that of Monofunctional C1-tetrahydrofolate synthase, mitochondrial (Mthfd1l) from Mus musculus (Mouse).